The following is a 174-amino-acid chain: uncharacterized protein (174 aa).

The protein to E.coli HemX C-terminal region.

This is an uncharacterized protein from Haemophilus influenzae (strain ATCC 51907 / DSM 11121 / KW20 / Rd).